Consider the following 328-residue polypeptide: Delta-aminolevulinic acid dehydratase (328 aa).

3 residues coordinate Zn(2+): cysteine 122, cysteine 124, and cysteine 132. The Schiff-base intermediate with substrate role is filled by lysine 197. Residues arginine 207 and arginine 219 each contribute to the 5-aminolevulinate site. Glutamate 235 provides a ligand contact to Mg(2+). Residue lysine 250 is the Schiff-base intermediate with substrate of the active site. Residues serine 276 and tyrosine 315 each coordinate 5-aminolevulinate.

This sequence belongs to the ALAD family. In terms of assembly, homooctamer. It depends on Zn(2+) as a cofactor.

It catalyses the reaction 2 5-aminolevulinate = porphobilinogen + 2 H2O + H(+). It functions in the pathway porphyrin-containing compound metabolism; protoporphyrin-IX biosynthesis; coproporphyrinogen-III from 5-aminolevulinate: step 1/4. Functionally, catalyzes an early step in the biosynthesis of tetrapyrroles. Binds two molecules of 5-aminolevulinate per subunit, each at a distinct site, and catalyzes their condensation to form porphobilinogen. This chain is Delta-aminolevulinic acid dehydratase (hemB), found in Halalkalibacterium halodurans (strain ATCC BAA-125 / DSM 18197 / FERM 7344 / JCM 9153 / C-125) (Bacillus halodurans).